A 762-amino-acid chain; its full sequence is N,N-dimethylformamidase beta subunit (762 aa).

As to quaternary structure, heterotetramer of two DmfA1 (alpha) and two DmfA2 (beta) subunits.

It catalyses the reaction N,N-dimethylformamide + H2O = dimethylamine + formate. Its activity is regulated as follows. Activity is slightly inhibited by Mg(2+) and Mn(2+), and slightly increased by Cu(2+). Activity is slightly inhibited by the chelating agents 8-hydroxyquinoline, ethylenediaminetetraacetate, o-phenanthroline and 2,2'-bipyridyl. Hydrolyzes N,N-dimethylformamide, and to a lesser extent N,N-dimethylacetamide and N,N-diethylacetamide. Has no activity against the substituted amides N-methylformamide, N-ethylformamide, N-ethylformamide and N-methylacetamide or the unsubstituted amides formamide, nicotinamide, acetoamide, benzamide, acetamide and acrylamide. The polypeptide is N,N-dimethylformamidase beta subunit (Alcaligenes sp).